The chain runs to 312 residues: Mevalonate kinase (312 aa).

Position 104 to 114 (104 to 114 (PISCGLGSSAS)) interacts with ATP. D155 serves as the catalytic Proton acceptor.

The protein belongs to the GHMP kinase family. Mevalonate kinase subfamily. As to quaternary structure, homodimer. Mg(2+) is required as a cofactor.

It localises to the cytoplasm. It carries out the reaction (R)-mevalonate + ATP = (R)-5-phosphomevalonate + ADP + H(+). It participates in isoprenoid biosynthesis; isopentenyl diphosphate biosynthesis via mevalonate pathway; isopentenyl diphosphate from (R)-mevalonate: step 1/3. Farnesyl- and geranyl-pyrophosphates are competitive inhibitors. Slightly inhibited by high concentration of ATP. Catalyzes the phosphorylation of (R)-mevalonate (MVA) to (R)-mevalonate 5-phosphate (MVAP). Functions in the mevalonate (MVA) pathway leading to isopentenyl diphosphate (IPP), a key precursor for the biosynthesis of isoprenoid compounds such as archaeal membrane lipids. In Methanocaldococcus jannaschii (strain ATCC 43067 / DSM 2661 / JAL-1 / JCM 10045 / NBRC 100440) (Methanococcus jannaschii), this protein is Mevalonate kinase.